Consider the following 199-residue polypeptide: 7-methyl-GTP pyrophosphatase (199 aa).

The active-site Proton acceptor is the D76.

This sequence belongs to the Maf family. YceF subfamily. A divalent metal cation is required as a cofactor.

The protein localises to the cytoplasm. It carries out the reaction N(7)-methyl-GTP + H2O = N(7)-methyl-GMP + diphosphate + H(+). In terms of biological role, nucleoside triphosphate pyrophosphatase that hydrolyzes 7-methyl-GTP (m(7)GTP). May have a dual role in cell division arrest and in preventing the incorporation of modified nucleotides into cellular nucleic acids. This is 7-methyl-GTP pyrophosphatase from Brucella abortus biovar 1 (strain 9-941).